Reading from the N-terminus, the 238-residue chain is Ribonuclease PH (238 aa).

Residues R86 and 124–126 (GTR) contribute to the phosphate site.

This sequence belongs to the RNase PH family. In terms of assembly, homohexameric ring arranged as a trimer of dimers.

The enzyme catalyses tRNA(n+1) + phosphate = tRNA(n) + a ribonucleoside 5'-diphosphate. Its function is as follows. Phosphorolytic 3'-5' exoribonuclease that plays an important role in tRNA 3'-end maturation. Removes nucleotide residues following the 3'-CCA terminus of tRNAs; can also add nucleotides to the ends of RNA molecules by using nucleoside diphosphates as substrates, but this may not be physiologically important. Probably plays a role in initiation of 16S rRNA degradation (leading to ribosome degradation) during starvation. The protein is Ribonuclease PH of Cupriavidus metallidurans (strain ATCC 43123 / DSM 2839 / NBRC 102507 / CH34) (Ralstonia metallidurans).